Reading from the N-terminus, the 288-residue chain is ATP synthase gamma chain (288 aa).

The protein belongs to the ATPase gamma chain family. F-type ATPases have 2 components, CF(1) - the catalytic core - and CF(0) - the membrane proton channel. CF(1) has five subunits: alpha(3), beta(3), gamma(1), delta(1), epsilon(1). CF(0) has three main subunits: a, b and c.

It is found in the cell inner membrane. Functionally, produces ATP from ADP in the presence of a proton gradient across the membrane. The gamma chain is believed to be important in regulating ATPase activity and the flow of protons through the CF(0) complex. The sequence is that of ATP synthase gamma chain from Legionella pneumophila (strain Corby).